The sequence spans 331 residues: N-arachidonyl glycine receptor (331 aa).

Over 1-26 (MAIPSNRDQLALSNGSHPEEYKIAAL) the chain is Extracellular. N14 carries N-linked (GlcNAc...) asparagine glycosylation. A helical membrane pass occupies residues 27–47 (VFYSCIFLIGLLVNVTALWVF). Over 48 to 56 (SCTTKKRTT) the chain is Cytoplasmic. The chain crosses the membrane as a helical span at residues 57-77 (VTIYMMNVALLDLVFILSLPF). Over 78 to 95 (RMFYYAKGEWPFGDYFCH) the chain is Extracellular. Residues C94 and C172 are joined by a disulfide bond. The helical transmembrane segment at 96-116 (ILGALVVFYPSLALWLLALIS) threads the bilayer. The Cytoplasmic portion of the chain corresponds to 117–138 (ADRYMAIVQPKYAKELKNTGKA). The helical transmembrane segment at 139–159 (VLACVGVWIMTLTTTVPLLLL) threads the bilayer. The Extracellular segment spans residues 160 to 191 (DEDPDKASSPATCLKISDIIHLKAVNVLNFTR). Residue N188 is glycosylated (N-linked (GlcNAc...) asparagine). Residues 192–212 (LIFFFLIPLFIMIGCYVVIIH) form a helical membrane-spanning segment. Residues 213–236 (SLLRGQTSKLKPKVKEKSIRIIVT) lie on the Cytoplasmic side of the membrane. Residues 237-257 (LLLQVLACFVPFHICFALLML) traverse the membrane as a helical segment. Over 258–268 (QGEENSYSPWG) the chain is Extracellular. The chain crosses the membrane as a helical span at residues 269–289 (AFTTFLMNLSTCLDVVLYYIV). The Cytoplasmic segment spans residues 290 to 331 (SKQFQARVISVMLYRNYLRSVRRKSVRSGSLRSLSNMNSEML). At S322 the chain carries Phosphoserine.

This sequence belongs to the G-protein coupled receptor 1 family. As to expression, expressed in testis, spleen and brain (at protein level).

The protein resides in the cell membrane. It localises to the cytoplasmic vesicle membrane. In terms of biological role, g protein-coupled receptor (GPCR) that plays a role in diverse physiological processes particularly within the immune and nervous systems. Becomes active when triggered by various endogenous ligands including endocannabinoid N-arachidonyl glycine (NAGly), delta-9-tetrahydrocannabinol or resolvin D2/RvD2 derived from the omega-3 fatty acid docosahexaenoic acid (DHA). Upon RvD2 binding, facilitates the resolution of inflammation, aiding in tissue repair and homeostasis. Mechanistically, RvD2 ligation initiates Galphas protein coupling, activation of cAMP-PKA signaling pathway and phosphorylation of STAT3, leading to RvD2-stimulated macrophage phagocytosis. Mediates NAGly-induced process of reorganization of actin filaments and induction of acrosomal exocytosis. Activation by N-arachidonoyl glycine (NAGly) can also induce apoptosis in macrophages. Plays a role in homeostasis of CD8+ subsets of intraepithelial lymphocytes (IELs) (CD8alphaalpha and CD8alphabeta IELs) in small intestine by supporting preferential migration of CD8alphaalpha T-cells to intraepithelial compartment over lamina propria compartment, and by mediating their reconstitution into small intestine after bone marrow transplant. Participates also in hypotensive responses, mediating reduction in intraocular and blood pressure. The sequence is that of N-arachidonyl glycine receptor from Rattus norvegicus (Rat).